We begin with the raw amino-acid sequence, 81 residues long: Cytoplasmic envelopment protein 3 (81 aa).

The N-myristoyl glycine; by host moiety is linked to residue Gly-2. The short motif at 22–23 (LV) is the Di-leucine-like internalization motif element. Residues 41–47 (DFDENVT) are asp/Glu-rich (acidic). Positions 47–81 (TEDADKSTQRRPRVIDVTPKRKPSGKSSHSKCAKC) are disordered. Basic residues predominate over residues 66 to 81 (KRKPSGKSSHSKCAKC).

The protein belongs to the herpesviridae cytoplasmic envelopment protein 3 family. As to quaternary structure, interacts with cytoplasmic envelopment protein 2; this interaction is essential for the proper localization of each protein to the assembly complex and thus for the production of infectious virus. Post-translationally, myristoylation and palmitoylation (probably on one or more of the nearby cysteines at the N-terminus) enable membrane-binding and Golgi apparatus-specific targeting and are essential for efficient packaging. Phosphorylated. Phosphorylation does not seem to be required for recycling to the host Golgi apparatus. Packaging is selective for underphosphorylated forms.

It is found in the virion tegument. Its subcellular location is the virion membrane. The protein resides in the host cell membrane. It localises to the host Golgi apparatus membrane. Plays an important role in the cytoplasmic envelopment of tegument proteins and capsids during the assembly and egress processes. Also participates in viral entry at the fusion step probably by regulating the core fusion machinery. This Homo sapiens (Human) protein is Cytoplasmic envelopment protein 3.